Reading from the N-terminus, the 148-residue chain is Cysteine-rich venom protein VAR6 (148 aa).

The signal sequence occupies residues 1–22; the sequence is MILLKLYLTLAAILCQSRGTTS. The region spanning 41 to 140 is the SCP domain; the sequence is NKHNDLRRTV…AGVMVGHYTQ (100 aa).

It belongs to the CRISP family. Contains 8 disulfide bonds. As to expression, expressed by the venom gland.

It is found in the secreted. Its function is as follows. Blocks ryanodine receptors, and potassium channels. The sequence is that of Cysteine-rich venom protein VAR6 from Varanus acanthurus (Ridge-tailed monitor).